A 182-amino-acid chain; its full sequence is UPF0397 protein BCA_2731 (182 aa).

A run of 5 helical transmembrane segments spans residues 9 to 29 (VVAI…GFSI), 40 to 60 (AILT…IGLI), 71 to 91 (WGIW…MGLI), 114 to 134 (ITGL…DIIV), and 142 to 162 (IVIQ…VLGL).

Belongs to the UPF0397 family.

The protein resides in the cell membrane. In Bacillus cereus (strain 03BB102), this protein is UPF0397 protein BCA_2731.